A 240-amino-acid chain; its full sequence is DUP240 protein DFP1 (240 aa).

The disordered stretch occupies residues 1–29 (MQPYLKKNTHATDDPKASPLKEGSPDNPE). 2 helical membrane passes run 61-81 (IMINFLLFVVTILATLTDIWF) and 84-104 (VLSPAMVIRICLGGSMVVLQI).

Belongs to the DUP/COS family.

It is found in the membrane. This Saccharomyces cerevisiae (Baker's yeast) protein is DUP240 protein DFP1.